The following is a 396-amino-acid chain: Tyrosine--tRNA ligase (396 aa).

The short motif at 43–52 is the 'HIGH' region element; sequence PSSPDIHLGH. The 'KMSKS' region motif lies at 227 to 231; it reads KMSKS. Residue Lys230 participates in ATP binding. Positions 338–396 constitute an S4 RNA-binding domain; the sequence is TGVIDFIILSGLAKSKSEARRLLEQGAVEINSEKISDQNTPVKCGDIIKAGKRRYSKAI.

This sequence belongs to the class-I aminoacyl-tRNA synthetase family. TyrS type 2 subfamily. In terms of assembly, homodimer.

It localises to the cytoplasm. It carries out the reaction tRNA(Tyr) + L-tyrosine + ATP = L-tyrosyl-tRNA(Tyr) + AMP + diphosphate + H(+). Catalyzes the attachment of tyrosine to tRNA(Tyr) in a two-step reaction: tyrosine is first activated by ATP to form Tyr-AMP and then transferred to the acceptor end of tRNA(Tyr). The chain is Tyrosine--tRNA ligase from Dehalococcoides mccartyi (strain CBDB1).